The chain runs to 275 residues: MSNSRQHQGHFARKRFGQNFLVDHGVIDSIVATIAPARGQRMVEIGPGLGALTEPLIARLATPETPLHAVELDRDLIARLKQRFGALLELHAGDALAFDFRSLAAPGDAPSLRIVGNLPYNISSPLLFHLMTFADVVVDQHFMLQNEVVERMVAEPGTKAFSRLSVMLQYRYVMDKLIDVPPESFQPPPKVDSAIVRMIPYAPHELPDVDPVLLGEIVTAAFSQRRKMLRNTLGDYRETIDFDALGFDLARRAEDVSVAEYVGVAQALAATRNAQ.

6 residues coordinate S-adenosyl-L-methionine: Asn19, Leu21, Gly46, Glu71, Asp94, and Asn117.

The protein belongs to the class I-like SAM-binding methyltransferase superfamily. rRNA adenine N(6)-methyltransferase family. RsmA subfamily.

The protein localises to the cytoplasm. It catalyses the reaction adenosine(1518)/adenosine(1519) in 16S rRNA + 4 S-adenosyl-L-methionine = N(6)-dimethyladenosine(1518)/N(6)-dimethyladenosine(1519) in 16S rRNA + 4 S-adenosyl-L-homocysteine + 4 H(+). Its function is as follows. Specifically dimethylates two adjacent adenosines (A1518 and A1519) in the loop of a conserved hairpin near the 3'-end of 16S rRNA in the 30S particle. May play a critical role in biogenesis of 30S subunits. This Burkholderia multivorans (strain ATCC 17616 / 249) protein is Ribosomal RNA small subunit methyltransferase A.